Here is a 501-residue protein sequence, read N- to C-terminus: Tegument protein US24 (501 aa).

This sequence belongs to the herpesviridae US22 family.

The protein localises to the virion tegument. The chain is Tegument protein US24 (US24) from Human cytomegalovirus (strain AD169) (HHV-5).